The following is a 499-amino-acid chain: Glutelin type-A 1 (499 aa).

An N-terminal signal peptide occupies residues 1 to 24; it reads MASINRPIVFFTVCLFLLCNGSLA. Intrachain disulfides connect Cys-46/Cys-79 and Cys-122/Cys-313. Cupin type-1 domains follow at residues 51–248 and 319–468; these read LQAF…QVAR and QNID…EEAQ.

It belongs to the 11S seed storage protein (globulins) family. In terms of assembly, hexamer; each subunit is composed of an acidic and a basic chain derived from a single precursor and linked by a disulfide bond.

In terms of biological role, seed storage protein. This Oryza sativa subsp. japonica (Rice) protein is Glutelin type-A 1 (GLUA1).